The chain runs to 140 residues: ATP synthase epsilon chain (140 aa).

It belongs to the ATPase epsilon chain family. In terms of assembly, F-type ATPases have 2 components, CF(1) - the catalytic core - and CF(0) - the membrane proton channel. CF(1) has five subunits: alpha(3), beta(3), gamma(1), delta(1), epsilon(1). CF(0) has three main subunits: a, b and c.

It is found in the cell inner membrane. Its function is as follows. Produces ATP from ADP in the presence of a proton gradient across the membrane. This is ATP synthase epsilon chain from Alkalilimnicola ehrlichii (strain ATCC BAA-1101 / DSM 17681 / MLHE-1).